The following is a 352-amino-acid chain: Peptide chain release factor 1 (352 aa).

Glutamine 229 carries the post-translational modification N5-methylglutamine.

The protein belongs to the prokaryotic/mitochondrial release factor family. Methylated by PrmC. Methylation increases the termination efficiency of RF1.

The protein resides in the cytoplasm. Functionally, peptide chain release factor 1 directs the termination of translation in response to the peptide chain termination codons UAG and UAA. This is Peptide chain release factor 1 from Acidiphilium cryptum (strain JF-5).